A 152-amino-acid chain; its full sequence is Large ribosomal subunit protein bL9 (152 aa).

This sequence belongs to the bacterial ribosomal protein bL9 family.

In terms of biological role, binds to the 23S rRNA. This Coxiella burnetii (strain RSA 331 / Henzerling II) protein is Large ribosomal subunit protein bL9.